A 1737-amino-acid polypeptide reads, in one-letter code: MKHLEGDIVWVPHTVNGYCRGKIIGYNEKNQVTVRLLELNEEIKINEQLIQNYNQSDDKDFSDMVEIQDLSEAIILNNLGLRYKSDQIYTYIGNVLISINPYKEIKDIYSLNILNKYKDINTIKSNPPHIYAVALRAYQSMVSEKKNQSIIISGESGSGKTEASKTILQYLINTSNSNSNNNTNINNNNNSIEKDILNSNPILEAFGNSRTTKNHNSSRFGKFLKIEFRSSDMKIDGASIETYLLEKSRISHRPDVNNLSYHIFYYLVMGASKEERERLGLDNDPSKYRYLDASTSVIESFKKQSNGGSGGGSGNNDLSESLQLVKQSLESMSIAKEQCDDIFLTLAAILHLGNIEFEVDQTENEQTSGFSKISEQKASVKKSLSMVSKLLGYPEQVFKQTLLNRNLKGGGRGSVYCRPMEVYQSEQTRDALSKALYVRLFASIVEKINVKFIQNTGSKDLQGGYSSKRNNLFIGVLDIFGFENLSSNSLDQLLINFTNEKLQQQFNLNVFENEQKDYLQEGIPWSTSNFIDNKECIELFEKKSYGLLSLLDDECMMPKGSEVTLLEKYNKQYHNTNQYYQRTLAKGTLGIKHFAGDVTYQTDGWLEKNRDSIPTEVEQLLSASSNNLIKSLFNLKELNKSNDNNSNNNNSNNNSSSSSSSQSTASITAKASPPRERFNSGSGSGTTSPLNLSGSSSPLSGSGSYSIIGGNSNSNSNNNNSSNNKKSQSVSVAGQFIEQLNKLISTINSTSVHYIRCIKPNVTMDCNNFNNSHVLSQLRNVGVLNTVKVRKMGYSYRRDFIQFYSRYNCILNSLNIKINLTNINHSNLCKEILENVNSQYKNNNNNKNNNNQIVKITTNSKPTFQIGKTKIFISDELYIYLEKKRYDSLVDSVLKIQAFFKMIKIRNQYKRNKESSLFLQTLIRAQRAKKDFEQLVILENKRKEEERKKELERQRKEEEERQKELERQRREEEKELERKRKEEERELERQRKEEEKEQERKRKEEEKEQERKKKEEKEIEKKRKEEEKKKKKNEQNLSLPSLDITNSPSLINTTTTTTTTTTTTTNTSSPPLSPPISPRPSTPSSTSSSSSTTSSPSTKKQLLFKFNSISNLLSKSLHGSSHSDKNSKEDNNSNNNNNGDSTIILSSDSSFGQPTPKATSTPTPPPPPPLKTQPVPISSGVENNSSPNLWSHRNSPNFNGLVREKSRARIGRLTIRSASPLDLTYLPDPSKNEGSPQFTSQSLDFTPNIPPIITNSIVEQQSSLSGINKPIPQRTISSSENSPLSRANSSISSSLLILTPTLTSLSTSTTPSTPTTPKTPTTLSSSSVSTSTSLSSVSSSVSSSSSSSIPTPIIESTPSNSNEDLITTLSSPISTGHTGESIEEKNKRFRIKIINELIETERDYVRDLNIVVEVFLNPIREKQLLSAKDINSLFSNIEILFSINMNVLKALEKDKDPLCENISVGQTFLDMSHYLKMYTTYCSNQQNALKILEEEKIKNQPFREYLEFCMNDSVCRGLPLNSFIIKPVQRICKYPLLIKETIKFTPNDHPDKPALEEVDKKISDIVQSINEAKRTLELFQKIVDLQNSIDGLEDTNLMEQGRTLLMEGTVSAVKELNSEDSLSRTLFLFNNLILICSFGTNVLSTAINQFKTKKLKLKAKIPISDSRLIFVSDTDSVKYALEIVNIKEDSNYILCFNNDQDRSKWFKQIKALIQEQKLSNAKKAATIGNSRLIQTTS.

The Myosin N-terminal SH3-like domain occupies 4–55 (LEGDIVWVPHTVNGYCRGKIIGYNEKNQVTVRLLELNEEIKINEQLIQNYNQ). A Myosin motor domain is found at 59–886 (KDFSDMVEIQ…LYIYLEKKRY (828 aa)). Residue 154 to 161 (GESGSGKT) coordinates ATP. The disordered stretch occupies residues 640-727 (KSNDNNSNNN…NNNSSNNKKS (88 aa)). 2 stretches are compositionally biased toward low complexity: residues 641-663 (SNDN…SSQS) and 679-724 (NSGS…SSNN). Residues 754–761 (YIRCIKPN) are actin-binding. 2 consecutive IQ domains span residues 889–918 (LVDS…SSLF) and 912–941 (NKES…LENK). The stretch at 926-1039 (QRAKKDFEQL…KKKNEQNLSL (114 aa)) forms a coiled coil. The segment covering 947–1028 (RKKELERQRK…IEKKRKEEEK (82 aa)) has biased composition (basic and acidic residues). 4 disordered regions span residues 947–1099 (RKKE…PSTK), 1117–1199 (LHGS…PNFN), 1266–1290 (GINK…ANSS), and 1304–1364 (SLST…SNED). Positions 1044 to 1070 (ITNSPSLINTTTTTTTTTTTTTNTSSP) are enriched in low complexity. Residues 1071–1081 (PLSPPISPRPS) show a composition bias toward pro residues. The segment covering 1082-1098 (TPSSTSSSSSTTSSPST) has biased composition (low complexity). A compositionally biased stretch (basic and acidic residues) spans 1121–1131 (SHSDKNSKEDN). The span at 1132-1141 (NSNNNNNGDS) shows a compositional bias: low complexity. The segment covering 1143–1153 (IILSSDSSFGQ) has biased composition (polar residues). The span at 1162–1171 (PTPPPPPPLK) shows a compositional bias: pro residues. 2 stretches are compositionally biased toward polar residues: residues 1180-1198 (GVEN…SPNF) and 1274-1288 (RTIS…SRAN). Residues 1304–1359 (SLSTSTTPSTPTTPKTPTTLSSSSVSTSTSLSSVSSSVSSSSSSSIPTPIIESTPS) show a composition bias toward low complexity. One can recognise a DH domain in the interval 1389–1572 (FRIKIINELI…SDIVQSINEA (184 aa)). In terms of domain architecture, PH spans 1603-1714 (TLLMEGTVSA…WFKQIKALIQ (112 aa)).

It belongs to the TRAFAC class myosin-kinesin ATPase superfamily. Myosin family. As to quaternary structure, monomer.

It localises to the cytoplasm. Functionally, myosins are actin-based motor molecules with ATPase activity. Involved in macropinocytosis and remodeling of actin cytoskeleton. In Dictyostelium discoideum (Social amoeba), this protein is Myosin-M heavy chain (myoM).